The sequence spans 67 residues: Protein AaeX (67 aa).

2 helical membrane-spanning segments follow: residues 3-23 and 43-63; these read LFPV…ELIL and FVWH…YLIS.

Belongs to the AaeX family.

It is found in the cell membrane. The chain is Protein AaeX from Enterobacter sp. (strain 638).